The chain runs to 210 residues: Thymidylate kinase (210 aa).

10-17 is a binding site for ATP; it reads GPEGAGKS.

This sequence belongs to the thymidylate kinase family.

It carries out the reaction dTMP + ATP = dTDP + ADP. Phosphorylation of dTMP to form dTDP in both de novo and salvage pathways of dTTP synthesis. This is Thymidylate kinase from Pseudomonas aeruginosa (strain LESB58).